The chain runs to 456 residues: Bifunctional protein GlmU (456 aa).

The interval 1–229 is pyrophosphorylase; it reads MSNSAMSVVI…LSEVEGVNNR (229 aa). Residues 11-14, Lys-25, Gln-76, 81-82, 103-105, Gly-140, Glu-154, Asn-169, and Asn-227 contribute to the UDP-N-acetyl-alpha-D-glucosamine site; these read LAAG, GT, and YGD. A Mg(2+)-binding site is contributed by Asp-105. Asn-227 is a Mg(2+) binding site. The segment at 230 to 250 is linker; that stretch reads LQLSRLERIYQAEQSEKLLLA. The interval 251–456 is N-acetyltransferase; it reads GVMLLDPARF…QGWQRPVKKK (206 aa). UDP-N-acetyl-alpha-D-glucosamine contacts are provided by Arg-333 and Lys-351. The Proton acceptor role is filled by His-363. Residues Tyr-366 and Asn-377 each contribute to the UDP-N-acetyl-alpha-D-glucosamine site. Acetyl-CoA-binding positions include Ala-380, 386–387, Ser-405, Ala-423, and Arg-440; that span reads NY.

In the N-terminal section; belongs to the N-acetylglucosamine-1-phosphate uridyltransferase family. It in the C-terminal section; belongs to the transferase hexapeptide repeat family. Homotrimer. Requires Mg(2+) as cofactor.

It is found in the cytoplasm. It carries out the reaction alpha-D-glucosamine 1-phosphate + acetyl-CoA = N-acetyl-alpha-D-glucosamine 1-phosphate + CoA + H(+). It catalyses the reaction N-acetyl-alpha-D-glucosamine 1-phosphate + UTP + H(+) = UDP-N-acetyl-alpha-D-glucosamine + diphosphate. The protein operates within nucleotide-sugar biosynthesis; UDP-N-acetyl-alpha-D-glucosamine biosynthesis; N-acetyl-alpha-D-glucosamine 1-phosphate from alpha-D-glucosamine 6-phosphate (route II): step 2/2. Its pathway is nucleotide-sugar biosynthesis; UDP-N-acetyl-alpha-D-glucosamine biosynthesis; UDP-N-acetyl-alpha-D-glucosamine from N-acetyl-alpha-D-glucosamine 1-phosphate: step 1/1. It functions in the pathway bacterial outer membrane biogenesis; LPS lipid A biosynthesis. Functionally, catalyzes the last two sequential reactions in the de novo biosynthetic pathway for UDP-N-acetylglucosamine (UDP-GlcNAc). The C-terminal domain catalyzes the transfer of acetyl group from acetyl coenzyme A to glucosamine-1-phosphate (GlcN-1-P) to produce N-acetylglucosamine-1-phosphate (GlcNAc-1-P), which is converted into UDP-GlcNAc by the transfer of uridine 5-monophosphate (from uridine 5-triphosphate), a reaction catalyzed by the N-terminal domain. This is Bifunctional protein GlmU from Serratia proteamaculans (strain 568).